We begin with the raw amino-acid sequence, 196 residues long: Holliday junction branch migration complex subunit RuvA (196 aa).

The segment at 1–65 (MIGNLSGTVD…ENTTQLYGFI (65 aa)) is domain I. A domain II region spans residues 66–143 (NKEEQSCLRL…KLETNNNNFY (78 aa)). Residues 144 to 147 (PINE) are flexible linker. Positions 147-196 (EDAVSALINLGYEKTKVYDTIKKYKPNLDTKDIIRTALKELSNYEIDIMQ) are domain III.

The protein belongs to the RuvA family. Homotetramer. Forms an RuvA(8)-RuvB(12)-Holliday junction (HJ) complex. HJ DNA is sandwiched between 2 RuvA tetramers; dsDNA enters through RuvA and exits via RuvB. An RuvB hexamer assembles on each DNA strand where it exits the tetramer. Each RuvB hexamer is contacted by two RuvA subunits (via domain III) on 2 adjacent RuvB subunits; this complex drives branch migration. In the full resolvosome a probable DNA-RuvA(4)-RuvB(12)-RuvC(2) complex forms which resolves the HJ.

The protein resides in the cytoplasm. In terms of biological role, the RuvA-RuvB-RuvC complex processes Holliday junction (HJ) DNA during genetic recombination and DNA repair, while the RuvA-RuvB complex plays an important role in the rescue of blocked DNA replication forks via replication fork reversal (RFR). RuvA specifically binds to HJ cruciform DNA, conferring on it an open structure. The RuvB hexamer acts as an ATP-dependent pump, pulling dsDNA into and through the RuvAB complex. HJ branch migration allows RuvC to scan DNA until it finds its consensus sequence, where it cleaves and resolves the cruciform DNA. This chain is Holliday junction branch migration complex subunit RuvA, found in Wolbachia sp. subsp. Brugia malayi (strain TRS).